The chain runs to 686 residues: Osmo-dependent choline transporter BetT2 (686 aa).

Over 1–22 the chain is Cytoplasmic; the sequence is MATDNPRAVDDQETHPKDRLNR. Residues 23 to 43 traverse the membrane as a helical segment; it reads VVFYVSALIILIFSLTTILFN. The Periplasmic portion of the chain corresponds to 44-60; sequence DFANRALNQVLDWVSST. Residues 61 to 81 form a helical membrane-spanning segment; that stretch reads FSWYYLLAATLYMVFVIFIAC. At 82–100 the chain is on the cytoplasmic side; that stretch reads SRYGNIKLGPKHSKPEFSL. Residues 101–121 traverse the membrane as a helical segment; the sequence is LSWSAMLFSAGIGIDLMFFSV. Residues 122 to 150 are Periplasmic-facing; that stretch reads AEPLSHYMHPPVGEGQTYEAARQGMVWTL. The helical transmembrane segment at 151–171 threads the bilayer; sequence FHYGLTGWCMYALIGMALGYF. Over 172 to 203 the chain is Cytoplasmic; sequence SYRYNLPLTIRSALYPIFGKKINGPIGHSVDT. Residues 204–224 form a helical membrane-spanning segment; sequence AAVIGTIFGIATTCGIGVVQL. The Periplasmic segment spans residues 225–237; it reads NYGLHVLFDLPEN. The helical transmembrane segment at 238 to 258 threads the bilayer; it reads LWVQTALILVAVIITIISVTS. Over 259–265 the chain is Cytoplasmic; sequence GVNKGLR. A helical transmembrane segment spans residues 266 to 286; it reads ILSEVNIYVSVGLMLFILFLG. Topologically, residues 287–325 are periplasmic; sequence NTEFLLNALVQNVGDYLSRFPSLALESFAFDQPKEWMNS. A helical membrane pass occupies residues 326 to 346; the sequence is WTLFFWAWWVAWSPFVGLFLA. At 347–356 the chain is on the cytoplasmic side; it reads RISRGRTIRE. A helical membrane pass occupies residues 357–377; that stretch reads FVSGTLIIPLLFTLTWLSIFG. The Periplasmic portion of the chain corresponds to 378–412; sequence NSALHNVIFDGNIALAETVLSNPAHGFYDLLAQYP. Residues 413–433 form a helical membrane-spanning segment; sequence WFPFIAGVATITGLLFYVTSA. Topologically, residues 434–459 are cytoplasmic; that stretch reads DSGALVLGNFTTQFTNIDHDAPRWLS. A helical membrane pass occupies residues 460–480; the sequence is VFWAVAIGLLTLAMLMTNGIT. At 481–484 the chain is on the periplasmic side; sequence ALQN. Residues 485 to 505 traverse the membrane as a helical segment; sequence ATIIMGLPFSFVMFLVMAGLY. The Cytoplasmic portion of the chain corresponds to 506 to 686; that stretch reads KSLRLEDYRQ…NRPLFPDPKA (181 aa).

This sequence belongs to the BCCT transporter (TC 2.A.15) family.

It localises to the cell inner membrane. Functionally, uptake of choline in the presence of high salinity. May primarily serve for osmoprotection. This chain is Osmo-dependent choline transporter BetT2, found in Acinetobacter baylyi (strain ATCC 33305 / BD413 / ADP1).